The sequence spans 162 residues: NADPH-dependent 7-cyano-7-deazaguanine reductase (162 aa).

Cys53 acts as the Thioimide intermediate in catalysis. Asp60 serves as the catalytic Proton donor. Substrate is bound by residues 75–77 (VES) and 94–95 (HE).

Belongs to the GTP cyclohydrolase I family. QueF type 1 subfamily.

It localises to the cytoplasm. It catalyses the reaction 7-aminomethyl-7-carbaguanine + 2 NADP(+) = 7-cyano-7-deazaguanine + 2 NADPH + 3 H(+). It functions in the pathway tRNA modification; tRNA-queuosine biosynthesis. Catalyzes the NADPH-dependent reduction of 7-cyano-7-deazaguanine (preQ0) to 7-aminomethyl-7-deazaguanine (preQ1). In Exiguobacterium sibiricum (strain DSM 17290 / CCUG 55495 / CIP 109462 / JCM 13490 / 255-15), this protein is NADPH-dependent 7-cyano-7-deazaguanine reductase.